The primary structure comprises 428 residues: 3-phosphoshikimate 1-carboxyvinyltransferase (428 aa).

3 residues coordinate 3-phosphoshikimate: Lys-20, Ser-21, and Arg-25. Lys-20 contributes to the phosphoenolpyruvate binding site. Residues Gly-92 and Arg-120 each contribute to the phosphoenolpyruvate site. Residues Ser-166, Gln-168, Asp-314, and Lys-341 each coordinate 3-phosphoshikimate. Gln-168 lines the phosphoenolpyruvate pocket. Asp-314 acts as the Proton acceptor in catalysis. Phosphoenolpyruvate contacts are provided by Arg-345 and Arg-387.

The protein belongs to the EPSP synthase family. Monomer.

It localises to the cytoplasm. It carries out the reaction 3-phosphoshikimate + phosphoenolpyruvate = 5-O-(1-carboxyvinyl)-3-phosphoshikimate + phosphate. Its pathway is metabolic intermediate biosynthesis; chorismate biosynthesis; chorismate from D-erythrose 4-phosphate and phosphoenolpyruvate: step 6/7. In terms of biological role, catalyzes the transfer of the enolpyruvyl moiety of phosphoenolpyruvate (PEP) to the 5-hydroxyl of shikimate-3-phosphate (S3P) to produce enolpyruvyl shikimate-3-phosphate and inorganic phosphate. This chain is 3-phosphoshikimate 1-carboxyvinyltransferase, found in Listeria monocytogenes serotype 4a (strain HCC23).